Reading from the N-terminus, the 354-residue chain is 3-isopropylmalate dehydrogenase (354 aa).

76–87 lines the NAD(+) pocket; the sequence is GPRWDSAKERPE. Arginine 94, arginine 104, arginine 130, and aspartate 215 together coordinate substrate. Residues aspartate 215, aspartate 239, and aspartate 243 each coordinate Mg(2+). Residue 273-285 participates in NAD(+) binding; the sequence is GSAPDIAGKNKAN.

The protein belongs to the isocitrate and isopropylmalate dehydrogenases family. LeuB type 1 subfamily. In terms of assembly, homodimer. Mg(2+) serves as cofactor. The cofactor is Mn(2+).

The protein localises to the cytoplasm. It catalyses the reaction (2R,3S)-3-isopropylmalate + NAD(+) = 4-methyl-2-oxopentanoate + CO2 + NADH. It participates in amino-acid biosynthesis; L-leucine biosynthesis; L-leucine from 3-methyl-2-oxobutanoate: step 3/4. Functionally, catalyzes the oxidation of 3-carboxy-2-hydroxy-4-methylpentanoate (3-isopropylmalate) to 3-carboxy-4-methyl-2-oxopentanoate. The product decarboxylates to 4-methyl-2 oxopentanoate. The sequence is that of 3-isopropylmalate dehydrogenase from Bacillus cereus (strain ATCC 14579 / DSM 31 / CCUG 7414 / JCM 2152 / NBRC 15305 / NCIMB 9373 / NCTC 2599 / NRRL B-3711).